Reading from the N-terminus, the 131-residue chain is Arsenate reductase 2 (131 aa).

Catalysis depends on nucleophile residues C10, C82, and C89. Cystine bridges form between C10–C82 and C82–C89.

Belongs to the low molecular weight phosphotyrosine protein phosphatase family. Thioredoxin-coupled ArsC subfamily.

It localises to the cytoplasm. The enzyme catalyses arsenate + [thioredoxin]-dithiol + H(+) = arsenite + [thioredoxin]-disulfide + H2O. In terms of biological role, catalyzes the reduction of arsenate [As(V)] to arsenite [As(III)]. The polypeptide is Arsenate reductase 2 (Staphylococcus haemolyticus (strain JCSC1435)).